We begin with the raw amino-acid sequence, 489 residues long: Glycogen synthase (489 aa).

Arginine 20 lines the ADP-alpha-D-glucose pocket.

This sequence belongs to the glycosyltransferase 1 family. Bacterial/plant glycogen synthase subfamily.

It catalyses the reaction [(1-&gt;4)-alpha-D-glucosyl](n) + ADP-alpha-D-glucose = [(1-&gt;4)-alpha-D-glucosyl](n+1) + ADP + H(+). It participates in glycan biosynthesis; glycogen biosynthesis. Synthesizes alpha-1,4-glucan chains using ADP-glucose. The chain is Glycogen synthase from Chlorobium phaeobacteroides (strain DSM 266 / SMG 266 / 2430).